Reading from the N-terminus, the 235-residue chain is MRSGLIAQKVGMTRLFTDEGTHVPVTVLKVEACQVVAVRTSETDGYTAVQLGAGVAKVKRTSKAMRGHFAAAKVEPKKKVVEFRVSEDCLLEPGAELSAAHFVAGQKVDIAGTTIGKGFAGAMKRHNFRGLEATHGVSVSHRSHGSTGQCQDPGRVFKGKKMAGHMGDTRITQQSLTVVATDADRGLILVKGSVPGADGAWLEVRDAVKKKLPEGVPLPAGLKAAVEAAVDGEKE.

An N5-methylglutamine modification is found at Gln151.

Belongs to the universal ribosomal protein uL3 family. In terms of assembly, part of the 50S ribosomal subunit. Forms a cluster with proteins L14 and L19. In terms of processing, methylated by PrmB.

One of the primary rRNA binding proteins, it binds directly near the 3'-end of the 23S rRNA, where it nucleates assembly of the 50S subunit. The chain is Large ribosomal subunit protein uL3 from Rhodospirillum rubrum (strain ATCC 11170 / ATH 1.1.1 / DSM 467 / LMG 4362 / NCIMB 8255 / S1).